A 1202-amino-acid chain; its full sequence is Caskin-2 (1202 aa).

ANK repeat units lie at residues 48 to 77, 81 to 110, 114 to 143, 147 to 176, 188 to 217, and 220 to 249; these read DGFS…TVDI, NGMR…AVNA, DGQI…NPCL, AKKT…CVAL, NYTT…EINR, and KTGT…DVNI. Tyr253 bears the Phosphotyrosine mark. One can recognise an SH3 domain in the interval 281-347; sequence SGILKVRALK…PPGIVEVVSK (67 aa). A disordered region spans residues 355 to 460; that stretch reads RLPSAPTPLR…GLHPPSLADN (106 aa). A phosphoserine mark is found at Ser358, Ser393, Ser396, Ser403, Ser406, and Ser409. Residues 415-425 show a composition bias toward polar residues; the sequence is SAGSGQSSEGT. Ser471 carries the phosphoserine modification. SAM domains are found at residues 489–552 and 558–622; these read KDAQ…LSIA and YIPT…LAEL. Disordered stretches follow at residues 676-1104 and 1116-1181; these read LQAA…APKP and GPKL…STKH. Position 725 is a phosphoserine (Ser725). Residues 731 to 740 are compositionally biased toward basic and acidic residues; that stretch reads NLPEGTERPP. Residues 765–774 show a composition bias toward pro residues; it reads SPAPGPPPGA. Phosphoserine occurs at positions 858, 877, 878, and 892. Residues 913 to 923 are compositionally biased toward pro residues; sequence PSEPPGPPAPA. The span at 940-949 shows a compositional bias: low complexity; sequence PPSRGSSGEG. Pro residues-rich tracts occupy residues 966–978 and 1018–1030; these read PAGP…PVPP and PAAP…PGES. Over residues 1031 to 1051 the composition is skewed to low complexity; that stretch reads PPASSLPQPEPSSLPAQGVPT. 2 stretches are compositionally biased toward pro residues: residues 1052–1068 and 1124–1133; these read PLAP…PCPG and GPRPVPPPRP. Residues 1135 to 1151 show a composition bias toward polar residues; it reads STGTVGPGQAQQRLEQT. The span at 1161–1172 shows a compositional bias: basic and acidic residues; that stretch reads AAEKSIGTKEQE.

May not bind CASK.

The protein localises to the cytoplasm. In Homo sapiens (Human), this protein is Caskin-2 (CASKIN2).